A 217-amino-acid chain; its full sequence is Probable glutathione S-transferase (217 aa).

One can recognise a GST N-terminal domain in the interval 2-81; that stretch reads AEVKLLGLRY…YIDEAFEGPS (80 aa). Residues S12, K39, I53, and 65-66 contribute to the glutathione site; that span reads ES. A GST C-terminal domain is found at 86-210; sequence DPYDRALARF…ELLIRYRAYI (125 aa).

It belongs to the GST superfamily. HSP26 family.

The catalysed reaction is RX + glutathione = an S-substituted glutathione + a halide anion + H(+). The chain is Probable glutathione S-transferase (PRP1) from Solanum tuberosum (Potato).